A 208-amino-acid polypeptide reads, in one-letter code: Outer-membrane lipoprotein carrier protein (208 aa).

An N-terminal signal peptide occupies residues Met-1–Ala-22.

It belongs to the LolA family. Monomer.

It localises to the periplasm. Functionally, participates in the translocation of lipoproteins from the inner membrane to the outer membrane. Only forms a complex with a lipoprotein if the residue after the N-terminal Cys is not an aspartate (The Asp acts as a targeting signal to indicate that the lipoprotein should stay in the inner membrane). This Shewanella sediminis (strain HAW-EB3) protein is Outer-membrane lipoprotein carrier protein.